Consider the following 570-residue polypeptide: Periplasmic trehalase (570 aa).

Positions 1 to 34 (MIPPEIRRSVLLQKAIKLALAGTLLTFASFSATA) are cleaved as a signal peptide. Residues Arg159, 166-167 (WD), Asn203, 212-214 (RSQ), 284-286 (RPE), and Gly317 each bind substrate. Catalysis depends on proton donor/acceptor residues Asp319 and Glu503. Glu518 serves as a coordination point for substrate. Residues 544-570 (KPCDSVPSTRPASLSATPTKTPSAATQ) are disordered. Residues 554-570 (PASLSATPTKTPSAATQ) are compositionally biased toward low complexity.

This sequence belongs to the glycosyl hydrolase 37 family. As to quaternary structure, monomer.

It is found in the periplasm. It carries out the reaction alpha,alpha-trehalose + H2O = alpha-D-glucose + beta-D-glucose. Its function is as follows. Provides the cells with the ability to utilize trehalose at high osmolarity by splitting it into glucose molecules that can subsequently be taken up by the phosphotransferase-mediated uptake system. The polypeptide is Periplasmic trehalase (Salmonella paratyphi B (strain ATCC BAA-1250 / SPB7)).